The sequence spans 87 residues: Small ribosomal subunit protein uS15c (87 aa).

Belongs to the universal ribosomal protein uS15 family. As to quaternary structure, part of the 30S ribosomal subunit.

The protein resides in the plastid. Its subcellular location is the chloroplast. The chain is Small ribosomal subunit protein uS15c (rps15) from Illicium oligandrum (Star anise).